The chain runs to 209 residues: Thiamine-phosphate synthase (209 aa).

Residues glutamine 40–lysine 44 and asparagine 72 contribute to the 4-amino-2-methyl-5-(diphosphooxymethyl)pyrimidine site. Mg(2+)-binding residues include aspartate 73 and aspartate 92. Position 111 (serine 111) interacts with 4-amino-2-methyl-5-(diphosphooxymethyl)pyrimidine. Threonine 137–serine 139 contributes to the 2-[(2R,5Z)-2-carboxy-4-methylthiazol-5(2H)-ylidene]ethyl phosphate binding site. 4-amino-2-methyl-5-(diphosphooxymethyl)pyrimidine is bound at residue lysine 140. Residues glycine 167 and isoleucine 187–serine 188 contribute to the 2-[(2R,5Z)-2-carboxy-4-methylthiazol-5(2H)-ylidene]ethyl phosphate site.

This sequence belongs to the thiamine-phosphate synthase family. Requires Mg(2+) as cofactor.

The enzyme catalyses 2-[(2R,5Z)-2-carboxy-4-methylthiazol-5(2H)-ylidene]ethyl phosphate + 4-amino-2-methyl-5-(diphosphooxymethyl)pyrimidine + 2 H(+) = thiamine phosphate + CO2 + diphosphate. The catalysed reaction is 2-(2-carboxy-4-methylthiazol-5-yl)ethyl phosphate + 4-amino-2-methyl-5-(diphosphooxymethyl)pyrimidine + 2 H(+) = thiamine phosphate + CO2 + diphosphate. It carries out the reaction 4-methyl-5-(2-phosphooxyethyl)-thiazole + 4-amino-2-methyl-5-(diphosphooxymethyl)pyrimidine + H(+) = thiamine phosphate + diphosphate. The protein operates within cofactor biosynthesis; thiamine diphosphate biosynthesis; thiamine phosphate from 4-amino-2-methyl-5-diphosphomethylpyrimidine and 4-methyl-5-(2-phosphoethyl)-thiazole: step 1/1. Functionally, condenses 4-methyl-5-(beta-hydroxyethyl)thiazole monophosphate (THZ-P) and 2-methyl-4-amino-5-hydroxymethyl pyrimidine pyrophosphate (HMP-PP) to form thiamine monophosphate (TMP). This Clostridium tetani (strain Massachusetts / E88) protein is Thiamine-phosphate synthase.